A 515-amino-acid polypeptide reads, in one-letter code: 2-isopropylmalate synthase (515 aa).

One can recognise a Pyruvate carboxyltransferase domain in the interval 4–266; the sequence is INIFDTTLRD…ETRLNLQEIK (263 aa). 4 residues coordinate Mn(2+): Asp13, His201, His203, and Asn237. The segment at 391–515 is regulatory domain; it reads QLSSLQVQYG…RAENQKVAMQ (125 aa).

The protein belongs to the alpha-IPM synthase/homocitrate synthase family. LeuA type 1 subfamily. Homodimer. The cofactor is Mn(2+).

The protein localises to the cytoplasm. It catalyses the reaction 3-methyl-2-oxobutanoate + acetyl-CoA + H2O = (2S)-2-isopropylmalate + CoA + H(+). The protein operates within amino-acid biosynthesis; L-leucine biosynthesis; L-leucine from 3-methyl-2-oxobutanoate: step 1/4. Its function is as follows. Catalyzes the condensation of the acetyl group of acetyl-CoA with 3-methyl-2-oxobutanoate (2-ketoisovalerate) to form 3-carboxy-3-hydroxy-4-methylpentanoate (2-isopropylmalate). This Geobacillus sp. (strain WCH70) protein is 2-isopropylmalate synthase.